The sequence spans 600 residues: Myelin expression factor 2 (600 aa).

The disordered stretch occupies residues 1–101; sequence MADANKAEVP…GEKKGPNRNR (101 aa). Thr-13 bears the Phosphothreonine mark. Position 17 is a phosphoserine (Ser-17). Basic and acidic residues predominate over residues 27–42; sequence GEPRREPHPAEAEKQQ. Lys-53 participates in a covalent cross-link: Glycyl lysine isopeptide (Lys-Gly) (interchain with G-Cter in SUMO2). Basic and acidic residues-rich tracts occupy residues 54–72 and 83–96; these read MENDESAKEEKSDLKEKST and YSKDKNSGAGEKKG. RRM domains are found at residues 100–178 and 233–310; these read NRVF…EDPD and STIF…MDDK. Arg-406 bears the Omega-N-methylarginine mark. Ser-431 is subject to Phosphoserine. An RRM 3 domain is found at 523 to 599; sequence NQIFVRNLPF…REIDVRLDRN (77 aa).

In terms of assembly, monomer.

The protein resides in the nucleus. Transcriptional repressor of the myelin basic protein gene (MBP). Binds to the proximal MB1 element 5'-TTGTCC-3' of the MBP promoter. Its binding to MB1 and function are inhibited by PURA. The protein is Myelin expression factor 2 (MYEF2) of Homo sapiens (Human).